Consider the following 385-residue polypeptide: Zinc finger protein B385R (385 aa).

C2H2-type zinc fingers lie at residues 166–190 and 168–190; these read LQCPNCGCIQELMGTIFDETHFYNH and CPNCGCIQELMGTIFDETHFYNH.

The protein belongs to the asfivirus B385R family.

This chain is Zinc finger protein B385R, found in African swine fever virus (isolate Tick/South Africa/Pretoriuskop Pr4/1996) (ASFV).